We begin with the raw amino-acid sequence, 243 residues long: Purine nucleoside phosphorylase YfiH (243 aa).

Residues His71, Cys107, and His124 each contribute to the Zn(2+) site.

It belongs to the purine nucleoside phosphorylase YfiH/LACC1 family. Homodimer. Requires Cu(2+) as cofactor. The cofactor is Zn(2+).

It carries out the reaction adenosine + phosphate = alpha-D-ribose 1-phosphate + adenine. It catalyses the reaction S-methyl-5'-thioadenosine + phosphate = 5-(methylsulfanyl)-alpha-D-ribose 1-phosphate + adenine. The enzyme catalyses inosine + phosphate = alpha-D-ribose 1-phosphate + hypoxanthine. The catalysed reaction is adenosine + H2O + H(+) = inosine + NH4(+). Functionally, purine nucleoside enzyme that catalyzes the phosphorolysis of adenosine and inosine nucleosides, yielding D-ribose 1-phosphate and the respective free bases, adenine and hypoxanthine. Also catalyzes the phosphorolysis of S-methyl-5'-thioadenosine into adenine and S-methyl-5-thio-alpha-D-ribose 1-phosphate. Also has adenosine deaminase activity. May also act as a polyphenol oxidase: able to oxidize syringaldazine and 2,2'-azino-bis(3-ethylbenzthiazoline-6-sulfonic acid) (ABTS) in vitro. The protein is Purine nucleoside phosphorylase YfiH of Escherichia coli (strain K12).